A 784-amino-acid polypeptide reads, in one-letter code: LPS-assembly protein LptD (784 aa).

The signal sequence occupies residues 1–24 (MKKRIPTLLATMIATALYSQQGLA). 2 cysteine pairs are disulfide-bonded: C31–C724 and C173–C725.

Belongs to the LptD family. Component of the lipopolysaccharide transport and assembly complex. Interacts with LptE and LptA. In terms of processing, contains two intramolecular disulfide bonds.

The protein localises to the cell outer membrane. In terms of biological role, together with LptE, is involved in the assembly of lipopolysaccharide (LPS) at the surface of the outer membrane. This is LPS-assembly protein LptD from Shigella flexneri.